A 586-amino-acid polypeptide reads, in one-letter code: Proline--tRNA ligase (586 aa).

Belongs to the class-II aminoacyl-tRNA synthetase family. ProS type 1 subfamily. In terms of assembly, homodimer.

The protein resides in the cytoplasm. It catalyses the reaction tRNA(Pro) + L-proline + ATP = L-prolyl-tRNA(Pro) + AMP + diphosphate. Functionally, catalyzes the attachment of proline to tRNA(Pro) in a two-step reaction: proline is first activated by ATP to form Pro-AMP and then transferred to the acceptor end of tRNA(Pro). As ProRS can inadvertently accommodate and process non-cognate amino acids such as alanine and cysteine, to avoid such errors it has two additional distinct editing activities against alanine. One activity is designated as 'pretransfer' editing and involves the tRNA(Pro)-independent hydrolysis of activated Ala-AMP. The other activity is designated 'posttransfer' editing and involves deacylation of mischarged Ala-tRNA(Pro). The misacylated Cys-tRNA(Pro) is not edited by ProRS. This is Proline--tRNA ligase from Kineococcus radiotolerans (strain ATCC BAA-149 / DSM 14245 / SRS30216).